The sequence spans 182 residues: Inner membrane assembly complex subunit 17 (182 aa).

The N-terminal 45 residues, 1–45 (MLKRRSNALITLSRTKLFPITTVAYYHRRLLNQQRRAVSTSPKKE), are a transit peptide targeting the mitochondrion. Topologically, residues 46–107 (IKSLEDLANL…EIPVKRFIRP (62 aa)) are mitochondrial matrix. A helical transmembrane segment spans residues 108–127 (LWMFILMGSSVYLLLHFSWW). Residues 128–158 (KLEHEERESQLKKEVEILEHQLNELIVQDKT) are a coiled coil. The Mitochondrial intermembrane segment spans residues 128–182 (KLEHEERESQLKKEVEILEHQLNELIVQDKTHNTSRGKGSNESTHMKPWYRRWFW).

This sequence belongs to the INA17 family. In terms of assembly, component of the inner membrane assembly (INA) complex, composed of INA17 and INA22. Interacts with a subset of F(1)F(0)-ATP synthase subunits of the F(1)-domain and the peripheral stalk.

It localises to the mitochondrion inner membrane. Its function is as follows. Component of the INA complex (INAC) that promotes the biogenesis of mitochondrial F(1)F(0)-ATP synthase. INAC facilitates the assembly of the peripheral stalk and promotes the assembly of the catalytic F(1)-domain with the membrane-embedded F(0)-domain. The protein is Inner membrane assembly complex subunit 17 of Saccharomyces cerevisiae (strain RM11-1a) (Baker's yeast).